A 962-amino-acid polypeptide reads, in one-letter code: MTKQTLTQLEQHDLFLRRHIGPDSNQQQAMLNFVGAESLEDLTAQIVPESIRLSQDLSIGDSCGEAEGIAYIRGLADQNQVFKSYIGMGYYGTQVPNVILRNVFENPGWYTAYTPYQPEIAQGRLEAILNFQQVSMDLTGLDLASASLLDEATAAAEAMALAKRVSKAKKANIFFVADDVFPQTLDVVKTRAECFGFEVVVGPASEAVNYELFGALFQYTNRFGQITDFTELFATLRAKNVIVTVAADIMSLVLLKSPGSMGADVVFGSAQRFGVPMGFGGPHAAFFVARDEHKRSMPGRIIGVSKDARGNRALRMAMQTREQHIRREKANSNICTAQILLANMASFYAVFHGPDGLKTIASRINRFADILAAGLQAKGVSLVNSTWFDTISIKGLDVAAVNARALAAEMNLRFDTDGTVGISLDETTLRTDIDALFDVILGAGHGLDVAALDAQIVSQGSQSIPAALVRQDAILSHPTFNRYQSETEMMRYIKRLESKDLALNYSMISLGSCTMKLNAAVEMLPVSWPEFANMHPFSPLDQAKGYTQLIEELSTWLVNITGYDAVCIQPNSGAQGEYAGLLAIKKYHESRGDAHRNICLIPQSAHGTNPASAQLAGMQVVVTACDKQGNVDLEDLKTKAAEVAENLSCIMITYPSTHGVYEESIREICDIVHQHGGQVYLDGANMNAQVGLTSPGFIGADVSHLNLHKTFAIPHGGGGPGMGPIGVKSHLAPFVAGHVVVKPGRESDHNGAVSAAPYGSAGILPISWMYIKLLGSQGLKKSTQTALLNANYVMKKLSEHYPVLFRGRNDRVAHECIIDLRPLKEASGVTEMDIAKRLNDYGFHAPTMSFPVAGTLMIEPTESESKVELDRFIDAMVSIRAEIAKVESGEWPVDNNPLHNAPHTMADIMDPEFDTRPYSREVAVFPSAAVRTNKFWPTVNRIDDVYGDRNLMCSCAPLSDYE.

Position 709 is an N6-(pyridoxal phosphate)lysine (lysine 709).

This sequence belongs to the GcvP family. The glycine cleavage system is composed of four proteins: P, T, L and H. It depends on pyridoxal 5'-phosphate as a cofactor.

It carries out the reaction N(6)-[(R)-lipoyl]-L-lysyl-[glycine-cleavage complex H protein] + glycine + H(+) = N(6)-[(R)-S(8)-aminomethyldihydrolipoyl]-L-lysyl-[glycine-cleavage complex H protein] + CO2. In terms of biological role, the glycine cleavage system catalyzes the degradation of glycine. The P protein binds the alpha-amino group of glycine through its pyridoxal phosphate cofactor; CO(2) is released and the remaining methylamine moiety is then transferred to the lipoamide cofactor of the H protein. This chain is Glycine dehydrogenase (decarboxylating), found in Shewanella baltica (strain OS195).